A 682-amino-acid chain; its full sequence is DNA-directed RNA polymerase subunit beta' (682 aa).

Zn(2+) is bound by residues Cys-69, Cys-71, Cys-87, and Cys-90. 3 residues coordinate Mg(2+): Asp-489, Asp-491, and Asp-493.

It belongs to the RNA polymerase beta' chain family. RpoC1 subfamily. In terms of assembly, in plastids the minimal PEP RNA polymerase catalytic core is composed of four subunits: alpha, beta, beta', and beta''. When a (nuclear-encoded) sigma factor is associated with the core the holoenzyme is formed, which can initiate transcription. Mg(2+) is required as a cofactor. It depends on Zn(2+) as a cofactor.

It is found in the plastid. Its subcellular location is the chloroplast. The catalysed reaction is RNA(n) + a ribonucleoside 5'-triphosphate = RNA(n+1) + diphosphate. DNA-dependent RNA polymerase catalyzes the transcription of DNA into RNA using the four ribonucleoside triphosphates as substrates. This chain is DNA-directed RNA polymerase subunit beta', found in Platanus occidentalis (Sycamore).